A 328-amino-acid polypeptide reads, in one-letter code: Malate dehydrogenase (328 aa).

12–18 (GAAGQIA) is a binding site for NAD(+). Substrate is bound by residues Arg-93 and Arg-99. Residues Asn-106, Gln-113, and 130-132 (VGN) each bind NAD(+). Residues Asn-132 and Arg-163 each coordinate substrate. His-188 serves as the catalytic Proton acceptor.

This sequence belongs to the LDH/MDH superfamily. MDH type 2 family.

The catalysed reaction is (S)-malate + NAD(+) = oxaloacetate + NADH + H(+). Catalyzes the reversible oxidation of malate to oxaloacetate. The polypeptide is Malate dehydrogenase (Burkholderia cenocepacia (strain HI2424)).